The primary structure comprises 119 residues: Ribonuclease P protein component (119 aa).

Belongs to the RnpA family. Consists of a catalytic RNA component (M1 or rnpB) and a protein subunit.

It carries out the reaction Endonucleolytic cleavage of RNA, removing 5'-extranucleotides from tRNA precursor.. Functionally, RNaseP catalyzes the removal of the 5'-leader sequence from pre-tRNA to produce the mature 5'-terminus. It can also cleave other RNA substrates such as 4.5S RNA. The protein component plays an auxiliary but essential role in vivo by binding to the 5'-leader sequence and broadening the substrate specificity of the ribozyme. This is Ribonuclease P protein component from Salmonella paratyphi A (strain AKU_12601).